A 192-amino-acid polypeptide reads, in one-letter code: Fe/S biogenesis protein NfuA (192 aa).

[4Fe-4S] cluster contacts are provided by cysteine 149 and cysteine 152.

It belongs to the NfuA family. Homodimer. Requires [4Fe-4S] cluster as cofactor.

Its function is as follows. Involved in iron-sulfur cluster biogenesis. Binds a 4Fe-4S cluster, can transfer this cluster to apoproteins, and thereby intervenes in the maturation of Fe/S proteins. Could also act as a scaffold/chaperone for damaged Fe/S proteins. The protein is Fe/S biogenesis protein NfuA of Colwellia psychrerythraea (strain 34H / ATCC BAA-681) (Vibrio psychroerythus).